Here is a 127-residue protein sequence, read N- to C-terminus: uncharacterized protein (127 aa).

A helical membrane pass occupies residues 12–32; the sequence is FFFLILFYFCIISSFLFLFIF.

The protein resides in the membrane. This is an uncharacterized protein from Saccharomyces cerevisiae (strain ATCC 204508 / S288c) (Baker's yeast).